The primary structure comprises 42 residues: Large ribosomal subunit protein eL32 (42 aa).

The protein belongs to the eukaryotic ribosomal protein eL32 family.

The sequence is that of Large ribosomal subunit protein eL32 (RPL32) from Zea mays (Maize).